Here is a 436-residue protein sequence, read N- to C-terminus: F-box/LRR-repeat protein At2g40920 (436 aa).

Positions 48–98 (EYLLQNFDLDHVMEILMRFPLTSLTRFKCVSKQWSSLISSRYFCNLLYTTV) constitute an F-box domain. LRR repeat units follow at residues 276-301 (NCVVVSFDIRSEQLTIIPVPREIHLD) and 393-416 (YYNLQSNDLRKVEIKGVPDSWFDK).

The sequence is that of F-box/LRR-repeat protein At2g40920 from Arabidopsis thaliana (Mouse-ear cress).